Consider the following 198-residue polypeptide: Dual specificity protein phosphatase 13B (198 aa).

The Tyrosine-protein phosphatase domain occupies 45-193 (HINEVWPNLF…LQVLDNRLRR (149 aa)). C138 serves as the catalytic Phosphocysteine intermediate.

Belongs to the protein-tyrosine phosphatase family. Non-receptor class dual specificity subfamily. In terms of tissue distribution, most abundantly expressed in the testis.

The enzyme catalyses O-phospho-L-tyrosyl-[protein] + H2O = L-tyrosyl-[protein] + phosphate. It catalyses the reaction O-phospho-L-seryl-[protein] + H2O = L-seryl-[protein] + phosphate. It carries out the reaction O-phospho-L-threonyl-[protein] + H2O = L-threonyl-[protein] + phosphate. Functionally, dual specificity phosphatase that dephosphorylates MAPK8/JNK and MAPK14/p38, but not MAPK1/ERK2, in vitro. Exhibits intrinsic phosphatase activity towards both phospho-seryl/threonyl and -tyrosyl residues, with similar specific activities in vitro. In Mus musculus (Mouse), this protein is Dual specificity protein phosphatase 13B.